The following is a 603-amino-acid chain: Protein US26 (603 aa).

Residues 496-513 show a composition bias toward acidic residues; that stretch reads EEEDQEEDDTSDDDDQEK. Disordered regions lie at residues 496-536 and 549-568; these read EEED…GSLE and AVAEQDRKKTQKKHKIDTAQ. The segment covering 517-533 has biased composition (polar residues); it reads NPQNNIGSLTRTPSSPG.

The protein belongs to the herpesviridae US22 family.

The sequence is that of Protein US26 (US26) from Human cytomegalovirus (strain Merlin) (HHV-5).